The chain runs to 366 residues: MDSEDETVEETVEGLLDDDGLPHGFCTVNYSSTDRFEGHFVHGEKNGRGKFYFFDGSTLEGFYVDDALQGQGIYTYEDGGSLHGTYVEGELNGPAQEYDTDGRLIFKGQYKDNVRHGVCWIYYPDGGSLVGEVNEDGDMTGDKVAYVYPDGRMALYGKFIDAEMLEGKLAILTSVDEGKPHFELVPNGPVYNFDKSTPSCISVNPLFPDPYESERVYVNDSLIHNAGEGLFAKVASAAQTVMSFYNGVRITHQEVDSREWALNGNTISLDDETVLDVPAPYNSYYKYCASLGHKANHSFSPNCMYDTFVHPRFGPIKCIRTMKAVEKDEELTVAYGYDHSVTGKNGPEAPEWYQQQLTAFQATQQK.

3 MORN repeats span residues 36–58, 59–81, and 106–128; these read FEGH…DGST, LEGF…DGGS, and FKGQ…DGGS. The region spanning 214-336 is the SET domain; that stretch reads ERVYVNDSLI…KDEELTVAYG (123 aa). Residues 226–228, N296, and H297 each bind S-adenosyl-L-methionine; that span reads AGE.

Belongs to the class V-like SAM-binding methyltransferase superfamily. Histone-lysine methyltransferase family. SET7 subfamily.

The protein localises to the nucleus. The protein resides in the chromosome. It catalyses the reaction L-lysyl(4)-[histone H3] + S-adenosyl-L-methionine = N(6)-methyl-L-lysyl(4)-[histone H3] + S-adenosyl-L-homocysteine + H(+). It carries out the reaction L-lysyl-[protein] + S-adenosyl-L-methionine = N(6)-methyl-L-lysyl-[protein] + S-adenosyl-L-homocysteine + H(+). In terms of biological role, histone methyltransferase that specifically monomethylates 'Lys-4' of histone H3. H3 'Lys-4' methylation represents a specific tag for epigenetic transcriptional activation. Plays a central role in the transcriptional activation of genes. Also has methyltransferase activity toward non-histone proteins. The sequence is that of Histone-lysine N-methyltransferase SETD7 (setd7) from Xenopus tropicalis (Western clawed frog).